The chain runs to 399 residues: S-adenosylmethionine synthase (399 aa).

His-17 is a binding site for ATP. Asp-19 contributes to the Mg(2+) binding site. Position 45 (Glu-45) interacts with K(+). 2 residues coordinate L-methionine: Glu-58 and Gln-101. Residues 101-111 form a flexible loop region; it reads QSADIAMGVDQ. ATP contacts are provided by residues 177-179, 244-245, Asp-253, 259-260, Ala-276, and Lys-280; these read DGK, RF, and RK. Asp-253 contacts L-methionine. Residue Lys-284 coordinates L-methionine.

It belongs to the AdoMet synthase family. In terms of assembly, homotetramer; dimer of dimers. The cofactor is Mg(2+). K(+) is required as a cofactor.

The protein localises to the cytoplasm. The catalysed reaction is L-methionine + ATP + H2O = S-adenosyl-L-methionine + phosphate + diphosphate. It participates in amino-acid biosynthesis; S-adenosyl-L-methionine biosynthesis; S-adenosyl-L-methionine from L-methionine: step 1/1. In terms of biological role, catalyzes the formation of S-adenosylmethionine (AdoMet) from methionine and ATP. The overall synthetic reaction is composed of two sequential steps, AdoMet formation and the subsequent tripolyphosphate hydrolysis which occurs prior to release of AdoMet from the enzyme. The polypeptide is S-adenosylmethionine synthase (Bacillus cereus (strain ATCC 10987 / NRS 248)).